Consider the following 245-residue polypeptide: tRNA pseudouridine synthase A (245 aa).

The Nucleophile role is filled by Asp52. Tyr110 is a substrate binding site.

The protein belongs to the tRNA pseudouridine synthase TruA family. Homodimer.

It carries out the reaction uridine(38/39/40) in tRNA = pseudouridine(38/39/40) in tRNA. Functionally, formation of pseudouridine at positions 38, 39 and 40 in the anticodon stem and loop of transfer RNAs. This is tRNA pseudouridine synthase A from Borrelia hermsii (strain HS1 / DAH).